A 163-amino-acid chain; its full sequence is Crossover junction endodeoxyribonuclease RuvC (163 aa).

Active-site residues include Asp-4, Glu-65, and Asp-138. Residues Asp-4, Glu-65, and Asp-138 each coordinate Mg(2+).

This sequence belongs to the RuvC family. In terms of assembly, homodimer which binds Holliday junction (HJ) DNA. The HJ becomes 2-fold symmetrical on binding to RuvC with unstacked arms; it has a different conformation from HJ DNA in complex with RuvA. In the full resolvosome a probable DNA-RuvA(4)-RuvB(12)-RuvC(2) complex forms which resolves the HJ. Requires Mg(2+) as cofactor.

It is found in the cytoplasm. The enzyme catalyses Endonucleolytic cleavage at a junction such as a reciprocal single-stranded crossover between two homologous DNA duplexes (Holliday junction).. Its function is as follows. The RuvA-RuvB-RuvC complex processes Holliday junction (HJ) DNA during genetic recombination and DNA repair. Endonuclease that resolves HJ intermediates. Cleaves cruciform DNA by making single-stranded nicks across the HJ at symmetrical positions within the homologous arms, yielding a 5'-phosphate and a 3'-hydroxyl group; requires a central core of homology in the junction. The consensus cleavage sequence is 5'-(A/T)TT(C/G)-3'. Cleavage occurs on the 3'-side of the TT dinucleotide at the point of strand exchange. HJ branch migration catalyzed by RuvA-RuvB allows RuvC to scan DNA until it finds its consensus sequence, where it cleaves and resolves the cruciform DNA. The chain is Crossover junction endodeoxyribonuclease RuvC from Corynebacterium jeikeium (strain K411).